A 380-amino-acid polypeptide reads, in one-letter code: XK-related protein 9 (380 aa).

8 helical membrane passes run 10 to 30, 39 to 59, 81 to 101, 167 to 187, 228 to 248, 264 to 284, 294 to 314, and 329 to 349; these read LLSAAGLVMYVADVCTDAALV, VVCAALTLLFIVVGLLVTQVF, LPVVSKRGLATLHLFGVGIFI, CSLVQLVGMSFSFMNAAWALV, ALLLIFSIYSTVGLAIVWLLG, SLEFLYRAIVGVILTFTFFNV, ITYYFLHSLINVLSLLLLFVL, and TLMAACSVLGLVCLVLYYLLL.

This sequence belongs to the XK family.

It is found in the cell membrane. It carries out the reaction a 1,2-diacyl-sn-glycero-3-phospho-L-serine(in) = a 1,2-diacyl-sn-glycero-3-phospho-L-serine(out). In terms of biological role, phospholipid scramblase that promotes phosphatidylserine exposure on apoptotic cell surface. Phosphatidylserine is a specific marker only present at the surface of apoptotic cells and acts as a specific signal for engulfment. This Tetraodon nigroviridis (Spotted green pufferfish) protein is XK-related protein 9.